A 339-amino-acid polypeptide reads, in one-letter code: 2,3,4,5-tetrahydropyridine-2,6-dicarboxylate N-succinyltransferase (339 aa).

Mg(2+) is bound at residue D180. The active-site Acyl-anhydride intermediate is E213. Succinyl-CoA is bound by residues R215, G230, S233, A256, E271–A272, G279, and K300.

The protein belongs to the type 2 tetrahydrodipicolinate N-succinyltransferase family. In terms of assembly, homotrimer.

It is found in the cytoplasm. It catalyses the reaction (S)-2,3,4,5-tetrahydrodipicolinate + succinyl-CoA + H2O = (S)-2-succinylamino-6-oxoheptanedioate + CoA. Its pathway is amino-acid biosynthesis; L-lysine biosynthesis via DAP pathway; LL-2,6-diaminopimelate from (S)-tetrahydrodipicolinate (succinylase route): step 1/3. Functionally, catalyzes the conversion of the cyclic tetrahydrodipicolinate (THDP) into the acyclic N-succinyl-L-2-amino-6-oxopimelate using succinyl-CoA. The polypeptide is 2,3,4,5-tetrahydropyridine-2,6-dicarboxylate N-succinyltransferase (Bifidobacterium longum (strain NCC 2705)).